A 448-amino-acid chain; its full sequence is MTQQYLTVTALTKYLKRKFDADPYLGRVYLTGEISNFRFRANAHQYFSLKDDHAKISAIMFKSAFQKLKFQPKEGMKVMVVGRISLYENSGSYQIYIEHMEPDGVGALYQALAELREKLGKEGLFEGPKQQLPRYPKRIAVVTSPSGAVIRDIITTVKRRYPIAQLVLFPTLVQGEQAADDIVRNIQRADAQSDFDTMIIGRGGGSIEDLWPFNEEKVARAIHAATTPIISSVGHETDVTIADMVADVRAATPTAAAELAVPVLNEELLRISERRSRLEQSFLYLLQQRTERFQRLQNSYVFKQPERLYEGQTIKLDRMTQRLFQAMTTIHHQKQRQAQGIIAQLQQQTPKGQLRESQQQLAFLQRNLQTQMTQLFLNKQKQFTSAVQQLDLLSPLKIMGRGYSYTTKEDRVVKTVTELQPADQLTIHYADGTVQANVETITAKKEEF.

This sequence belongs to the XseA family. As to quaternary structure, heterooligomer composed of large and small subunits.

The protein localises to the cytoplasm. The enzyme catalyses Exonucleolytic cleavage in either 5'- to 3'- or 3'- to 5'-direction to yield nucleoside 5'-phosphates.. Its function is as follows. Bidirectionally degrades single-stranded DNA into large acid-insoluble oligonucleotides, which are then degraded further into small acid-soluble oligonucleotides. This Enterococcus faecalis (strain ATCC 700802 / V583) protein is Exodeoxyribonuclease 7 large subunit.